The chain runs to 763 residues: Phosphoglycerol transferase I (763 aa).

Helical transmembrane passes span 1–21, 26–46, 77–97, and 108–128; these read MSELLSVALFLASVLIYAWKA, WWFAATLTVLGLFVILNITLY, ILPGIGIALALVAVFGALGWV, and VGYSLLALLLALGSVDASPAF.

The protein belongs to the OpgB family.

It is found in the cell inner membrane. It carries out the reaction a phosphatidylglycerol + a membrane-derived-oligosaccharide D-glucose = a 1,2-diacyl-sn-glycerol + a membrane-derived-oligosaccharide 6-(glycerophospho)-D-glucose.. The protein operates within glycan metabolism; osmoregulated periplasmic glucan (OPG) biosynthesis. Its function is as follows. Transfers a phosphoglycerol residue from phosphatidylglycerol to the membrane-bound nascent glucan backbones. This is Phosphoglycerol transferase I from Salmonella schwarzengrund (strain CVM19633).